The sequence spans 417 residues: NADH-quinone oxidoreductase subunit D (417 aa).

The protein belongs to the complex I 49 kDa subunit family. As to quaternary structure, NDH-1 is composed of 14 different subunits. Subunits NuoB, C, D, E, F, and G constitute the peripheral sector of the complex.

The protein resides in the cell inner membrane. The catalysed reaction is a quinone + NADH + 5 H(+)(in) = a quinol + NAD(+) + 4 H(+)(out). Functionally, NDH-1 shuttles electrons from NADH, via FMN and iron-sulfur (Fe-S) centers, to quinones in the respiratory chain. The immediate electron acceptor for the enzyme in this species is believed to be ubiquinone. Couples the redox reaction to proton translocation (for every two electrons transferred, four hydrogen ions are translocated across the cytoplasmic membrane), and thus conserves the redox energy in a proton gradient. The sequence is that of NADH-quinone oxidoreductase subunit D from Burkholderia ambifaria (strain ATCC BAA-244 / DSM 16087 / CCUG 44356 / LMG 19182 / AMMD) (Burkholderia cepacia (strain AMMD)).